Here is a 337-residue protein sequence, read N- to C-terminus: Biotin synthase 1 (337 aa).

The disordered stretch occupies residues 1–23 (MSSVLTQPLAFHPPRPAVQPREH). The region spanning 57 to 284 (TRVEFATLLS…TARVRLSAGR (228 aa)) is the Radical SAM core domain. Residues cysteine 72, cysteine 76, and cysteine 79 each contribute to the [4Fe-4S] cluster site. 4 residues coordinate [2Fe-2S] cluster: cysteine 116, cysteine 147, cysteine 207, and arginine 279.

The protein belongs to the radical SAM superfamily. Biotin synthase family. In terms of assembly, homodimer. [4Fe-4S] cluster serves as cofactor. It depends on [2Fe-2S] cluster as a cofactor.

It catalyses the reaction (4R,5S)-dethiobiotin + (sulfur carrier)-SH + 2 reduced [2Fe-2S]-[ferredoxin] + 2 S-adenosyl-L-methionine = (sulfur carrier)-H + biotin + 2 5'-deoxyadenosine + 2 L-methionine + 2 oxidized [2Fe-2S]-[ferredoxin]. It participates in cofactor biosynthesis; biotin biosynthesis; biotin from 7,8-diaminononanoate: step 2/2. Catalyzes the conversion of dethiobiotin (DTB) to biotin by the insertion of a sulfur atom into dethiobiotin via a radical-based mechanism. The chain is Biotin synthase 1 from Polaromonas sp. (strain JS666 / ATCC BAA-500).